The primary structure comprises 382 residues: cAMP-dependent protein kinase type I-alpha regulatory subunit (382 aa).

Ala-2 bears the N-acetylalanine mark. Positions 2-136 are dimerization and phosphorylation; the sequence is ATSSSSSSEE…AALAKAIEKN (135 aa). The tract at residues 62 to 96 is disordered; that stretch reads TKQLLNQQKSGSRSDSREDEISPPPPMNPVVKGRR. The short motif at 97–101 is the Pseudophosphorylation motif element; the sequence is RRGAI. Residues 138–255, Glu-203, Arg-212, 256–382, Glu-327, and Arg-336 each bind 3',5'-cyclic AMP; these read LFAH…SKVS and ILES…SLSV.

The protein belongs to the cAMP-dependent kinase regulatory chain family. As to quaternary structure, the inactive form of the enzyme is composed of two regulatory chains and two catalytic chains. Activation by cAMP produces two active catalytic monomers and a regulatory dimer that binds four cAMP molecules. Post-translationally, the pseudophosphorylation site binds to the substrate-binding region of the catalytic chain but is not phosphorylated. The physiological significance of phosphorylations by other kinases is unclear.

The protein localises to the cell membrane. The protein is cAMP-dependent protein kinase type I-alpha regulatory subunit (PRKAR1A) of Gallus gallus (Chicken).